We begin with the raw amino-acid sequence, 355 residues long: MKVDPNKEKALAAVLIQIEKQFGKGSIMKLGEDRSMDVETISTGSLSLDVALGAGGLPMGRIVEIYGPESSGKTTLTLEVIAAAQREGKTCAFIDAEHALDPIYAKKLGVDIDNLLCSQPDTGEQALEICDALTRSGAVDVIVVDSVAALTPKAEIEGEIGDSHMGLAARMMSQAMRKLAGNLKQSNTLLIFINQIRMKIGVMFGNPETTTGGNALKFYASVRLDIRRTGAIKDGDEVVGNETRVKVVKNKVAAPFKQAEFQILYGQGINRTGELVDLGVAHKLIEKAGAWYSYKGDKIGQGRANAGKYLTENPAIATEIDKTLRELLLSNPSALAAKADASTEDNVDLETGEVF.

67–74 (GPESSGKT) is an ATP binding site.

This sequence belongs to the RecA family.

Its subcellular location is the cytoplasm. Its function is as follows. Can catalyze the hydrolysis of ATP in the presence of single-stranded DNA, the ATP-dependent uptake of single-stranded DNA by duplex DNA, and the ATP-dependent hybridization of homologous single-stranded DNAs. It interacts with LexA causing its activation and leading to its autocatalytic cleavage. The sequence is that of Protein RecA from Shewanella baltica (strain OS223).